Here is an 88-residue protein sequence, read N- to C-terminus: UPF0297 protein SAK_2030 (88 aa).

The protein belongs to the UPF0297 family.

In Streptococcus agalactiae serotype Ia (strain ATCC 27591 / A909 / CDC SS700), this protein is UPF0297 protein SAK_2030.